The chain runs to 550 residues: Cytokinin dehydrogenase 10 (550 aa).

Residues 1-26 (MMPRAQLTTFLIVTSFLSTVPYLRAP) form the signal peptide. One can recognise an FAD-binding PCMH-type domain in the interval 64 to 245 (VHATPNGVFR…TRARIRLEPA (182 aa)). Residues G100, K101, and G102 each coordinate FAD. Residue H103 is modified to Pros-8alpha-FAD histidine. Positions 104, 108, 169, 174, 180, 184, and 235 each coordinate FAD. N-linked (GlcNAc...) asparagine glycosylation occurs at N289. Y489, S524, and Q527 together coordinate FAD. Residues 523–550 (LSPGQGIFPPPPPPSPPPPAAGEPITAS) form a disordered region. The segment covering 530–543 (FPPPPPPSPPPPAA) has biased composition (pro residues).

The protein belongs to the oxygen-dependent FAD-linked oxidoreductase family. In terms of assembly, monomer. It depends on FAD as a cofactor.

The protein resides in the secreted. The protein localises to the extracellular space. The catalysed reaction is N(6)-dimethylallyladenine + A + H2O = 3-methyl-2-butenal + adenine + AH2. Catalyzes the oxidation of cytokinins, a family of N(6)-substituted adenine derivatives that are plant hormones, where the substituent is an isopentenyl group. This Oryza sativa subsp. japonica (Rice) protein is Cytokinin dehydrogenase 10 (CKX10).